A 363-amino-acid chain; its full sequence is 5-formaminoimidazole-4-carboxamide-1-(beta)-D-ribofuranosyl 5'-monophosphate synthetase (363 aa).

5-amino-1-(5-phospho-beta-D-ribosyl)imidazole-4-carboxamide contacts are provided by His-29 and Ser-96. An ATP-grasp domain is found at 118 to 354 (RDILRWEAER…IALEIKNAIK (237 aa)). ATP contacts are provided by residues 148–210 (PSEI…CNYC) and Glu-232. Asn-260 lines the 5-amino-1-(5-phospho-beta-D-ribosyl)imidazole-4-carboxamide pocket. The Mg(2+) site is built by Gln-299 and Glu-312.

Belongs to the phosphohexose mutase family. Requires Mg(2+) as cofactor. The cofactor is Mn(2+).

The enzyme catalyses 5-amino-1-(5-phospho-beta-D-ribosyl)imidazole-4-carboxamide + formate + ATP = 5-formamido-1-(5-phospho-D-ribosyl)imidazole-4-carboxamide + ADP + phosphate. It functions in the pathway purine metabolism; IMP biosynthesis via de novo pathway; 5-formamido-1-(5-phospho-D-ribosyl)imidazole-4-carboxamide from 5-amino-1-(5-phospho-D-ribosyl)imidazole-4-carboxamide (formate route): step 1/1. Catalyzes the ATP- and formate-dependent formylation of 5-aminoimidazole-4-carboxamide-1-beta-d-ribofuranosyl 5'-monophosphate (AICAR) to 5-formaminoimidazole-4-carboxamide-1-beta-d-ribofuranosyl 5'-monophosphate (FAICAR) in the absence of folates. In Methanobrevibacter smithii (strain ATCC 35061 / DSM 861 / OCM 144 / PS), this protein is 5-formaminoimidazole-4-carboxamide-1-(beta)-D-ribofuranosyl 5'-monophosphate synthetase.